A 463-amino-acid polypeptide reads, in one-letter code: Adenosylhomocysteinase (463 aa).

The substrate site is built by Thr-54, Asp-128, and Glu-189. 190-192 lines the NAD(+) pocket; that stretch reads TTT. Substrate-binding residues include Lys-219 and Asp-223. NAD(+) is bound by residues Asn-224, 253–258, Glu-276, Asn-311, 332–334, and Asn-377; these read GYGDVG and IGH.

This sequence belongs to the adenosylhomocysteinase family. As to quaternary structure, homotetramer. NAD(+) serves as cofactor.

It localises to the cytoplasm. It catalyses the reaction S-adenosyl-L-homocysteine + H2O = L-homocysteine + adenosine. It participates in amino-acid biosynthesis; L-homocysteine biosynthesis; L-homocysteine from S-adenosyl-L-homocysteine: step 1/1. In terms of biological role, may play a key role in the regulation of the intracellular concentration of adenosylhomocysteine. The protein is Adenosylhomocysteinase of Rhodobacter capsulatus (strain ATCC BAA-309 / NBRC 16581 / SB1003).